Reading from the N-terminus, the 873-residue chain is Paramyosin (873 aa).

The interval 1-25 is nonhelical region; it reads MSSRSSKYMYKSSGGAGDISIEYGT. Residues 26–852 are a coiled coil; sequence DLGALTRLED…IRAKHRSWVT (827 aa). Residues 853-873 form a nonhelical region region; the sequence is TSQVPGGTRQVFVTEESSQNF.

It belongs to the paramyosin family. As to quaternary structure, homodimer. Binds IgG and collagen. In terms of tissue distribution, expressed in all tissues except in saliva.

It localises to the cytoplasm. The protein localises to the myofibril. Its function is as follows. Paramyosin is a major structural component of many thick filaments isolated from invertebrate muscles. The chain is Paramyosin (PRM) from Rhipicephalus microplus (Cattle tick).